A 503-amino-acid polypeptide reads, in one-letter code: Anaerobic nitric oxide reductase flavorubredoxin (503 aa).

The zinc metallo-hydrolase stretch occupies residues Leu30 to Ile210. Fe cation-binding residues include His79, Glu81, Asp83, His147, Asp166, and His227. The 140-residue stretch at Ile254 to Ala393 folds into the Flavodoxin-like domain. Residues Thr260–Asn264 and Ala342–Leu369 contribute to the FMN site. The 52-residue stretch at Asn451–Ile502 folds into the Rubredoxin-like domain. Fe cation is bound by residues Cys456, Cys459, Cys489, and Cys492.

The protein in the N-terminal section; belongs to the zinc metallo-hydrolase group 3 family. As to quaternary structure, homotetramer. Requires Fe cation as cofactor. The cofactor is FMN.

Its subcellular location is the cytoplasm. Its pathway is nitrogen metabolism; nitric oxide reduction. Anaerobic nitric oxide reductase; uses NADH to detoxify nitric oxide (NO), protecting several 4Fe-4S NO-sensitive enzymes. Has at least 2 reductase partners, only one of which (NorW, flavorubredoxin reductase) has been identified. NO probably binds to the di-iron center; electrons enter from the NorW at rubredoxin and are transferred sequentially to the FMN center and the di-iron center. Also able to function as an aerobic oxygen reductase. The sequence is that of Anaerobic nitric oxide reductase flavorubredoxin from Pectobacterium carotovorum subsp. carotovorum (strain PC1).